Here is a 501-residue protein sequence, read N- to C-terminus: Glutamyl-tRNA(Gln) amidotransferase subunit A (501 aa).

Active-site charge relay system residues include Lys80 and Ser155. Ser179 (acyl-ester intermediate) is an active-site residue.

The protein belongs to the amidase family. GatA subfamily. As to quaternary structure, heterotrimer of A, B and C subunits.

The catalysed reaction is L-glutamyl-tRNA(Gln) + L-glutamine + ATP + H2O = L-glutaminyl-tRNA(Gln) + L-glutamate + ADP + phosphate + H(+). Allows the formation of correctly charged Gln-tRNA(Gln) through the transamidation of misacylated Glu-tRNA(Gln) in organisms which lack glutaminyl-tRNA synthetase. The reaction takes place in the presence of glutamine and ATP through an activated gamma-phospho-Glu-tRNA(Gln). The sequence is that of Glutamyl-tRNA(Gln) amidotransferase subunit A from Cupriavidus necator (strain ATCC 17699 / DSM 428 / KCTC 22496 / NCIMB 10442 / H16 / Stanier 337) (Ralstonia eutropha).